A 100-amino-acid chain; its full sequence is Cell division topological specificity factor (100 aa).

This sequence belongs to the MinE family.

Functionally, prevents the cell division inhibition by proteins MinC and MinD at internal division sites while permitting inhibition at polar sites. This ensures cell division at the proper site by restricting the formation of a division septum at the midpoint of the long axis of the cell. This chain is Cell division topological specificity factor, found in Synechococcus sp. (strain JA-2-3B'a(2-13)) (Cyanobacteria bacterium Yellowstone B-Prime).